A 581-amino-acid polypeptide reads, in one-letter code: Pectinesterase 3 (581 aa).

An N-terminal signal peptide occupies residues 1–55; sequence MDTIKSFKGYGKVNELEQQAYEKKTRKRLIIIAVSSIVLIAVIIAAVAGVVIHNR. 5 N-linked (GlcNAc...) asparagine glycosylation sites follow: Asn-101, Asn-156, Asn-200, Asn-217, and Asn-268. Substrate-binding residues include Thr-348 and Gln-378. The active-site Proton donor is the Asp-401. Cys-415 and Cys-435 are disulfide-bonded. Asp-422 acts as the Nucleophile in catalysis. An N-linked (GlcNAc...) asparagine glycan is attached at Asn-477. The substrate site is built by Arg-486 and Trp-488.

In the N-terminal section; belongs to the PMEI family. This sequence in the C-terminal section; belongs to the pectinesterase family.

It localises to the secreted. The protein resides in the cell wall. The enzyme catalyses [(1-&gt;4)-alpha-D-galacturonosyl methyl ester](n) + n H2O = [(1-&gt;4)-alpha-D-galacturonosyl](n) + n methanol + n H(+). It participates in glycan metabolism; pectin degradation; 2-dehydro-3-deoxy-D-gluconate from pectin: step 1/5. May have roles in the deposition of pectin in developing tissues and in the wall loosening and cell separation that occurs in cell expansion, fruit ripening and abscission. The protein is Pectinesterase 3 (MPE3) of Phaseolus vulgaris (Kidney bean).